A 66-amino-acid chain; its full sequence is Large ribosomal subunit protein bL33c (66 aa).

The protein belongs to the bacterial ribosomal protein bL33 family.

It localises to the plastid. The protein localises to the chloroplast. In Ceratophyllum demersum (Rigid hornwort), this protein is Large ribosomal subunit protein bL33c.